Here is a 261-residue protein sequence, read N- to C-terminus: Guanine nucleotide exchange factor BopE (261 aa).

Belongs to the GEF (guanine exchange factor) SopE family. Monomer. Interacts with human CDC42.

The protein resides in the secreted. Its function is as follows. Activator for both CDC42 and RAC1 by directly interacting with these Rho GTPases and acting as a guanine nucleotide exchange factor (GEF). This activation results in actin cytoskeleton rearrangements and stimulates membrane ruffling, thus promoting bacterial entry into non-phagocytic cells. The polypeptide is Guanine nucleotide exchange factor BopE (bopE) (Burkholderia mallei (strain NCTC 10247)).